The sequence spans 78 residues: Large ribosomal subunit protein bL28 (78 aa).

This sequence belongs to the bacterial ribosomal protein bL28 family.

The sequence is that of Large ribosomal subunit protein bL28 from Prochlorococcus marinus (strain MIT 9211).